The chain runs to 197 residues: MASKGPSYRIENIVATVNLGVELDLEKLAERLTMAEYNPDQFPGLILRLTKPRISALIFRTGKMVCTGAKNEEDLKNAVRALVKLLKDHGADVPFDPEVQIQNIVASGNLFAEVDLEQAVLMLENAMYEPEQFPGLIYRMSSPRVVILIFGSGKIVCTGAKSEKDVATAVQKLYNQLKDLGVLYIEEGEAEEGEEEL.

2 tandem repeats follow at residues 10–86 (IENI…VKLL) and 101–177 (IQNI…YNQL).

This sequence belongs to the TBP family.

Functionally, general factor that plays a role in the activation of archaeal genes transcribed by RNA polymerase. Binds specifically to the TATA box promoter element which lies close to the position of transcription initiation. This chain is TATA-box-binding protein, found in Pyrobaculum neutrophilum (strain DSM 2338 / JCM 9278 / NBRC 100436 / V24Sta) (Thermoproteus neutrophilus).